Here is a 204-residue protein sequence, read N- to C-terminus: MADITAADIRKLRELTGAGMSDVKKALVDNDGDVEKAKSWLREKGKAQVAKRAARSAANGLVESYLHRTDPQLPPTLGVLVELRCETDFVAKTDDFKQLARDLAQHIAAADPLYVTADQIPNEVLEAERKIYEAAAREEGKPEQAITKIVEGKVNGYVKSSVLLDQPWVKDGKVTIRALLDQAGASLGEKIEVGRFSRFNIRQA.

The segment at 87–90 (TDFV) is involved in Mg(2+) ion dislocation from EF-Tu.

This sequence belongs to the EF-Ts family.

It localises to the cytoplasm. In terms of biological role, associates with the EF-Tu.GDP complex and induces the exchange of GDP to GTP. It remains bound to the aminoacyl-tRNA.EF-Tu.GTP complex up to the GTP hydrolysis stage on the ribosome. The chain is Elongation factor Ts from Frankia alni (strain DSM 45986 / CECT 9034 / ACN14a).